The primary structure comprises 549 residues: Membrane protein insertase YidC (549 aa).

The chain crosses the membrane as a helical span at residues 8–28 (VLLATVLSVAVLIVWQFVFPS). Over residues 29-39 (PKPKPQPPKPP) the composition is skewed to pro residues. Residues 29-68 (PKPKPQPPKPPEAAQRAEAPAAPAPGQPAAQAPAPAVPQD) form a disordered region. 2 stretches are compositionally biased toward low complexity: residues 40-49 (EAAQRAEAPA) and 55-68 (QPAA…VPQD). The next 4 helical transmembrane spans lie at 328 to 348 (IDYG…LFVM), 354 to 374 (LVAN…VLLY), 424 to 444 (LGGC…YATL), and 502 to 522 (PGFF…YIFV).

The protein belongs to the OXA1/ALB3/YidC family. Type 1 subfamily. Interacts with the Sec translocase complex via SecD. Specifically interacts with transmembrane segments of nascent integral membrane proteins during membrane integration.

The protein resides in the cell inner membrane. Functionally, required for the insertion and/or proper folding and/or complex formation of integral membrane proteins into the membrane. Involved in integration of membrane proteins that insert both dependently and independently of the Sec translocase complex, as well as at least some lipoproteins. Aids folding of multispanning membrane proteins. The sequence is that of Membrane protein insertase YidC from Anaeromyxobacter sp. (strain Fw109-5).